A 328-amino-acid polypeptide reads, in one-letter code: tRNA uridine(34) hydroxylase (328 aa).

The Rhodanese domain occupies 130–224 (LDKDTVVLDT…YGKDPEVQGE (95 aa)). The Cysteine persulfide intermediate role is filled by cysteine 184.

Belongs to the TrhO family.

The catalysed reaction is uridine(34) in tRNA + AH2 + O2 = 5-hydroxyuridine(34) in tRNA + A + H2O. In terms of biological role, catalyzes oxygen-dependent 5-hydroxyuridine (ho5U) modification at position 34 in tRNAs. The chain is tRNA uridine(34) hydroxylase from Streptococcus pneumoniae (strain ATCC 700669 / Spain 23F-1).